The primary structure comprises 556 residues: Oxygen-dependent choline dehydrogenase (556 aa).

Residue 4–33 participates in FAD binding; sequence DYIIIGAGSAGNVLATRLTEDPNTTVLLLE. Residue histidine 473 is the Proton acceptor of the active site.

It belongs to the GMC oxidoreductase family. FAD is required as a cofactor.

The catalysed reaction is choline + A = betaine aldehyde + AH2. It carries out the reaction betaine aldehyde + NAD(+) + H2O = glycine betaine + NADH + 2 H(+). The protein operates within amine and polyamine biosynthesis; betaine biosynthesis via choline pathway; betaine aldehyde from choline (cytochrome c reductase route): step 1/1. In terms of biological role, involved in the biosynthesis of the osmoprotectant glycine betaine. Catalyzes the oxidation of choline to betaine aldehyde and betaine aldehyde to glycine betaine at the same rate. The chain is Oxygen-dependent choline dehydrogenase from Escherichia coli O127:H6 (strain E2348/69 / EPEC).